The sequence spans 275 residues: 4-hydroxy-3-methylbut-2-enyl diphosphate reductase (275 aa).

Cysteine 12 contacts [4Fe-4S] cluster. (2E)-4-hydroxy-3-methylbut-2-enyl diphosphate contacts are provided by histidine 36 and histidine 70. Residues histidine 36 and histidine 70 each contribute to the dimethylallyl diphosphate site. Positions 36 and 70 each coordinate isopentenyl diphosphate. Position 92 (cysteine 92) interacts with [4Fe-4S] cluster. A (2E)-4-hydroxy-3-methylbut-2-enyl diphosphate-binding site is contributed by histidine 120. Histidine 120 serves as a coordination point for dimethylallyl diphosphate. Histidine 120 lines the isopentenyl diphosphate pocket. Glutamate 122 acts as the Proton donor in catalysis. A (2E)-4-hydroxy-3-methylbut-2-enyl diphosphate-binding site is contributed by threonine 157. Residue cysteine 185 coordinates [4Fe-4S] cluster. (2E)-4-hydroxy-3-methylbut-2-enyl diphosphate-binding residues include serine 213, serine 214, asparagine 215, and serine 257. Dimethylallyl diphosphate contacts are provided by serine 213, serine 214, asparagine 215, and serine 257. The isopentenyl diphosphate site is built by serine 213, serine 214, asparagine 215, and serine 257.

This sequence belongs to the IspH family. Requires [4Fe-4S] cluster as cofactor.

It catalyses the reaction isopentenyl diphosphate + 2 oxidized [2Fe-2S]-[ferredoxin] + H2O = (2E)-4-hydroxy-3-methylbut-2-enyl diphosphate + 2 reduced [2Fe-2S]-[ferredoxin] + 2 H(+). The catalysed reaction is dimethylallyl diphosphate + 2 oxidized [2Fe-2S]-[ferredoxin] + H2O = (2E)-4-hydroxy-3-methylbut-2-enyl diphosphate + 2 reduced [2Fe-2S]-[ferredoxin] + 2 H(+). It participates in isoprenoid biosynthesis; dimethylallyl diphosphate biosynthesis; dimethylallyl diphosphate from (2E)-4-hydroxy-3-methylbutenyl diphosphate: step 1/1. Its pathway is isoprenoid biosynthesis; isopentenyl diphosphate biosynthesis via DXP pathway; isopentenyl diphosphate from 1-deoxy-D-xylulose 5-phosphate: step 6/6. In terms of biological role, catalyzes the conversion of 1-hydroxy-2-methyl-2-(E)-butenyl 4-diphosphate (HMBPP) into a mixture of isopentenyl diphosphate (IPP) and dimethylallyl diphosphate (DMAPP). Acts in the terminal step of the DOXP/MEP pathway for isoprenoid precursor biosynthesis. This Nitratiruptor sp. (strain SB155-2) protein is 4-hydroxy-3-methylbut-2-enyl diphosphate reductase.